The chain runs to 717 residues: Inhibitor of nuclear factor kappa-B kinase subunit epsilon (717 aa).

One can recognise a Protein kinase domain in the interval 9–315 (WHTDDLLGQG…LQRTVIHVFS (307 aa)). 15–23 (LGQGATASV) is an ATP binding site. Lysine 30 participates in a covalent cross-link: Glycyl lysine isopeptide (Lys-Gly) (interchain with G-Cter in ubiquitin). Position 38 (lysine 38) interacts with ATP. The active-site Proton acceptor is the aspartate 135. Residue serine 172 is modified to Phosphoserine; by autocatalysis and IKKB. Lysine 231 participates in a covalent cross-link: Glycyl lysine isopeptide (Lys-Gly) (interchain with G-Cter in SUMO1). The interval 385 to 650 (SSDTPKGLAF…AQESLNKIFD (266 aa)) is interaction with DDX3X. Lysine 403 participates in a covalent cross-link: Glycyl lysine isopeptide (Lys-Gly) (interchain with G-Cter in ubiquitin). Residues 452–473 (LQDTCQQTLEVTRTALLYLSSS) are leucine-zipper. Phosphothreonine is present on threonine 503. At serine 665 the chain carries Phosphoserine.

This sequence belongs to the protein kinase superfamily. Ser/Thr protein kinase family. I-kappa-B kinase subfamily. Homodimer. Interacts with MAVS/IPS1. Interacts (via protein kinase domain) with TTLL12 (via N-terminus); the interaction prevents MAVS binding to IKBKE. Interacts with the adapter proteins AZI2/NAP1, TANK and TBKBP1/SINTBAD. Interacts with SIKE1. Interacts with TICAM1/TRIF, IRF3 and RIGI; interactions are disrupted by the interaction between IKBKE and SIKE1. Interacts with TOPORS; induced by DNA damage. Interacts with CYLD, IKBKB, IKBKG and MYD88. Interacts with IFIH1. Interacts with DDX3X; the interaction may be induced upon virus infection. Interacts with TRIM6 (via SPRY box). Interacts with unanchored K48-linked polyubiquitin chains; this leads to IKBKE activation. Interacts with TBK1. Interacts with FKBP5. In terms of processing, sumoylation by TOPORS upon DNA damage is required for protection of cells against DNA damage-induced cell death. Desumoylated by SENP1. Post-translationally, autophosphorylated and phosphorylated by IKBKB/IKKB. Phosphorylation at Ser-172 is enhanced by the interaction with DDX3X. Phosphorylated at Thr-503 upon IFN activation. 'Lys-63'-linked polyubiquitinated at Lys-30 and Lys-403 by TRAF2:BIRC2 and TRAF2:BIRC3 complexes. Ubiquitination is induced by LPS, TNFA and interleukin-1 and required for full kinase activity and KF-kappa-B pathway activation. In terms of tissue distribution, expressed in bone marrow-derived macrophages and at low levels in liver and white adipose tissue (at protein level). Detected in muscle and lung.

It localises to the cytoplasm. Its subcellular location is the nucleus. The protein resides in the PML body. It carries out the reaction L-seryl-[I-kappa-B protein] + ATP = O-phospho-L-seryl-[I-kappa-B protein] + ADP + H(+). With respect to regulation, kinase activity is inhibited competitively by amlexanox. Functionally, serine/threonine kinase that plays an essential role in regulating inflammatory responses to viral infection, through the activation of the type I IFN, NF-kappa-B and STAT signaling. Also involved in TNFA and inflammatory cytokines, like Interleukin-1, signaling. Following activation of viral RNA sensors, such as RIG-I-like receptors, associates with DDX3X and phosphorylates interferon regulatory factors (IRFs), IRF3 and IRF7, as well as DDX3X. This activity allows subsequent homodimerization and nuclear translocation of the IRF3 leading to transcriptional activation of pro-inflammatory and antiviral genes including IFNB. In order to establish such an antiviral state, IKBKE forms several different complexes whose composition depends on the type of cell and cellular stimuli. Thus, several scaffolding molecules including IPS1/MAVS, TANK, AZI2/NAP1 or TBKBP1/SINTBAD can be recruited to the IKBKE-containing-complexes. Activated by polyubiquitination in response to TNFA and interleukin-1, regulates the NF-kappa-B signaling pathway through, at least, the phosphorylation of CYLD. Phosphorylates inhibitors of NF-kappa-B thus leading to the dissociation of the inhibitor/NF-kappa-B complex and ultimately the degradation of the inhibitor. In addition, is also required for the induction of a subset of ISGs which displays antiviral activity, may be through the phosphorylation of STAT1 at 'Ser-708'. Phosphorylation of STAT1 at 'Ser-708' also seems to promote the assembly and DNA binding of ISGF3 (STAT1:STAT2:IRF9) complexes compared to GAF (STAT1:STAT1) complexes, in this way regulating the balance between type I and type II IFN responses. Protects cells against DNA damage-induced cell death. Also plays an important role in energy balance regulation by sustaining a state of chronic, low-grade inflammation in obesity, wich leads to a negative impact on insulin sensitivity. Phosphorylates AKT1. This chain is Inhibitor of nuclear factor kappa-B kinase subunit epsilon (Ikbke), found in Mus musculus (Mouse).